Reading from the N-terminus, the 560-residue chain is Formate--tetrahydrofolate ligase (560 aa).

Thr-69–Ser-76 is an ATP binding site.

This sequence belongs to the formate--tetrahydrofolate ligase family.

It carries out the reaction (6S)-5,6,7,8-tetrahydrofolate + formate + ATP = (6R)-10-formyltetrahydrofolate + ADP + phosphate. It functions in the pathway one-carbon metabolism; tetrahydrofolate interconversion. The protein is Formate--tetrahydrofolate ligase of Listeria welshimeri serovar 6b (strain ATCC 35897 / DSM 20650 / CCUG 15529 / CIP 8149 / NCTC 11857 / SLCC 5334 / V8).